A 247-amino-acid polypeptide reads, in one-letter code: DNA repair protein RecO (247 aa).

The protein belongs to the RecO family.

In terms of biological role, involved in DNA repair and RecF pathway recombination. The sequence is that of DNA repair protein RecO from Brucella abortus (strain 2308).